Here is a 250-residue protein sequence, read N- to C-terminus: Imidazole glycerol phosphate synthase subunit HisF (250 aa).

Catalysis depends on residues Asp11 and Asp130.

It belongs to the HisA/HisF family. In terms of assembly, heterodimer of HisH and HisF.

Its subcellular location is the cytoplasm. It carries out the reaction 5-[(5-phospho-1-deoxy-D-ribulos-1-ylimino)methylamino]-1-(5-phospho-beta-D-ribosyl)imidazole-4-carboxamide + L-glutamine = D-erythro-1-(imidazol-4-yl)glycerol 3-phosphate + 5-amino-1-(5-phospho-beta-D-ribosyl)imidazole-4-carboxamide + L-glutamate + H(+). Its pathway is amino-acid biosynthesis; L-histidine biosynthesis; L-histidine from 5-phospho-alpha-D-ribose 1-diphosphate: step 5/9. Functionally, IGPS catalyzes the conversion of PRFAR and glutamine to IGP, AICAR and glutamate. The HisF subunit catalyzes the cyclization activity that produces IGP and AICAR from PRFAR using the ammonia provided by the HisH subunit. This chain is Imidazole glycerol phosphate synthase subunit HisF, found in Bacteroides fragilis (strain YCH46).